The primary structure comprises 239 residues: Carboxy-S-adenosyl-L-methionine synthase (239 aa).

Residues Tyr-35, 64 to 66 (GCS), 88 to 89 (DN), and Arg-195 contribute to the S-adenosyl-L-methionine site.

The protein belongs to the class I-like SAM-binding methyltransferase superfamily. Cx-SAM synthase family. As to quaternary structure, homodimer.

The catalysed reaction is prephenate + S-adenosyl-L-methionine = carboxy-S-adenosyl-L-methionine + 3-phenylpyruvate + H2O. Catalyzes the conversion of S-adenosyl-L-methionine (SAM) to carboxy-S-adenosyl-L-methionine (Cx-SAM). In Helicobacter pylori (strain G27), this protein is Carboxy-S-adenosyl-L-methionine synthase.